Here is a 547-residue protein sequence, read N- to C-terminus: Mucin-13 (547 aa).

Residues methionine 1–serine 210 are compositionally biased toward low complexity. A disordered region spans residues methionine 1 to proline 218. Residues serine 210–valine 249 form the EGF-like 1 domain. Cystine bridges form between cysteine 214/cysteine 225, cysteine 219/cysteine 234, and cysteine 236/cysteine 248. Residues asparagine 243, asparagine 244, and asparagine 263 are each glycosylated (N-linked (GlcNAc...) asparagine). The 117-residue stretch at lysine 250–aspartate 366 folds into the SEA domain. 2 consecutive EGF-like domains span residues glutamine 361 to valine 401 and valine 401 to glutamate 441. 5 disulfide bridges follow: cysteine 365/cysteine 378, cysteine 370/cysteine 384, cysteine 386/cysteine 400, cysteine 409/cysteine 427, and cysteine 429/cysteine 440. The helical transmembrane segment at isoleucine 459–isoleucine 479 threads the bilayer. At valine 480–tyrosine 547 the chain is on the cytoplasmic side. The segment at lysine 525–tyrosine 547 is disordered.

Homodimer of beta subunits. In terms of processing, cleaved into two subunits, alpha and beta, probably between the first EGF domain and the SEA domain. Beta subunit contains the cytoplasmic tail and alpha subunit the extracellular tail. The homooligomerization into dimers is dependent on intrachain disulfide bonds. Post-translationally, highly glycosylated.

The protein localises to the cell membrane. It localises to the secreted. Epithelial and hemopoietic transmembrane mucin that may play a role in cell signaling. This is Mucin-13 (Muc13) from Rattus norvegicus (Rat).